We begin with the raw amino-acid sequence, 290 residues long: Glycine--tRNA ligase alpha subunit (290 aa).

This sequence belongs to the class-II aminoacyl-tRNA synthetase family. In terms of assembly, tetramer of two alpha and two beta subunits.

It localises to the cytoplasm. The enzyme catalyses tRNA(Gly) + glycine + ATP = glycyl-tRNA(Gly) + AMP + diphosphate. This chain is Glycine--tRNA ligase alpha subunit, found in Prochlorococcus marinus (strain NATL1A).